The primary structure comprises 400 residues: Formate-dependent phosphoribosylglycinamide formyltransferase (400 aa).

N(1)-(5-phospho-beta-D-ribosyl)glycinamide-binding positions include 22–23 (EL) and Glu82. ATP contacts are provided by residues Arg115, Lys157, 162 to 167 (SSGKGQ), 197 to 200 (EGFV), and Glu205. In terms of domain architecture, ATP-grasp spans 120-315 (RLAAETLGLP…EFELHARAIL (196 aa)). 2 residues coordinate Mg(2+): Glu274 and Glu286. Residues Asp293, Lys362, and 369–370 (RR) contribute to the N(1)-(5-phospho-beta-D-ribosyl)glycinamide site.

The protein belongs to the PurK/PurT family. As to quaternary structure, homodimer.

It carries out the reaction N(1)-(5-phospho-beta-D-ribosyl)glycinamide + formate + ATP = N(2)-formyl-N(1)-(5-phospho-beta-D-ribosyl)glycinamide + ADP + phosphate + H(+). Its pathway is purine metabolism; IMP biosynthesis via de novo pathway; N(2)-formyl-N(1)-(5-phospho-D-ribosyl)glycinamide from N(1)-(5-phospho-D-ribosyl)glycinamide (formate route): step 1/1. Its function is as follows. Involved in the de novo purine biosynthesis. Catalyzes the transfer of formate to 5-phospho-ribosyl-glycinamide (GAR), producing 5-phospho-ribosyl-N-formylglycinamide (FGAR). Formate is provided by PurU via hydrolysis of 10-formyl-tetrahydrofolate. The polypeptide is Formate-dependent phosphoribosylglycinamide formyltransferase (Mycolicibacterium gilvum (strain PYR-GCK) (Mycobacterium gilvum (strain PYR-GCK))).